We begin with the raw amino-acid sequence, 189 residues long: Peptidyl-tRNA hydrolase (189 aa).

Tyrosine 15 contacts tRNA. Catalysis depends on histidine 20, which acts as the Proton acceptor. Positions 66, 68, and 114 each coordinate tRNA.

This sequence belongs to the PTH family. In terms of assembly, monomer.

It is found in the cytoplasm. The catalysed reaction is an N-acyl-L-alpha-aminoacyl-tRNA + H2O = an N-acyl-L-amino acid + a tRNA + H(+). Its function is as follows. Hydrolyzes ribosome-free peptidyl-tRNAs (with 1 or more amino acids incorporated), which drop off the ribosome during protein synthesis, or as a result of ribosome stalling. In terms of biological role, catalyzes the release of premature peptidyl moieties from peptidyl-tRNA molecules trapped in stalled 50S ribosomal subunits, and thus maintains levels of free tRNAs and 50S ribosomes. This is Peptidyl-tRNA hydrolase from Streptococcus sanguinis (strain SK36).